The following is a 43-amino-acid chain: Protein PsbN (43 aa).

The chain crosses the membrane as a helical span at residues 5-27 (TVLSIFISSLLLGITGYSIYTAF).

This sequence belongs to the PsbN family.

It localises to the plastid. The protein resides in the chloroplast thylakoid membrane. May play a role in photosystem I and II biogenesis. The chain is Protein PsbN from Porphyra purpurea (Red seaweed).